Reading from the N-terminus, the 740-residue chain is MLKLFSAFRKNKIWDFNGGIHPPEMKTQSNGTPLRQVPLAQRFVIPLKQHIGAEGELCVSVGDKVLRGQPLTRGHGKMLPVHAPTSGTVTAIAPHSTAHPSALAELSVIIDADGEDCWIPRDGWADYRTRSREELIERIHQFGVAGLGGAGFPTGVKLQGGGDKIETLIINAAECEPYITADDRLMQDCAAQVVEGIRILAHILQPREILIGIEDNKPQAISMLRAVLADSNDISLRVIPTKYPSGGAKQLTYILTGKQVPHGGRSSDIGVLMQNVGTAYAVKRAVIDGEPITERVVTLTGEAIARPGNVWARLGTPVRHLLNDAGFCPSADQMVIMGGPLMGFTLPWLDVPVVKITNCLLAPSANELGEPQEEQSCIRCSACADACPADLLPQQLYWFSKGQQHDKATTHNIADCIECGACAWVCPSNIPLVQYFRQEKAEIAAIRQEEKRAAEAKARFEARQARLEREKAARLERHKSAAVQPAAKDKDAIAAALARVKEKQAQATQPIVIKAGERPDNSAIIAAREARKAQARAKQAELQQTNDAATVADPRKTAVEAAIARAKARKLEQQQANAEPEEQVDPRKAAVEAAIARAKARKLEQQQANAEPEEQVDPRKAAVEAAIARAKARKLEQQQSNAEPEEQVDPRKAAVEAAIARAKARKLEQQQANAEPEEQVDPRKAAVEAAIARAKARKLEQQQTNAEPEEQVDPRKAAVAAAIARAQAKKAAQQKVVNED.

4Fe-4S ferredoxin-type domains lie at 369-397 (GEPQ…QQLY) and 407-436 (KATT…VQYF). [4Fe-4S] cluster is bound by residues Cys-377, Cys-380, Cys-383, Cys-387, Cys-416, Cys-419, Cys-422, and Cys-426. The segment at 602–716 (KLEQQQANAE…EPEEQVDPRK (115 aa)) is disordered.

Belongs to the 4Fe4S bacterial-type ferredoxin family. RnfC subfamily. As to quaternary structure, the complex is composed of six subunits: RsxA, RsxB, RsxC, RsxD, RsxE and RsxG. [4Fe-4S] cluster serves as cofactor.

Its subcellular location is the cell inner membrane. Functionally, part of a membrane-bound complex that couples electron transfer with translocation of ions across the membrane. Required to maintain the reduced state of SoxR. The polypeptide is Ion-translocating oxidoreductase complex subunit C (Escherichia coli O139:H28 (strain E24377A / ETEC)).